We begin with the raw amino-acid sequence, 592 residues long: Glycosyltransferase 25 family member (592 aa).

The first 13 residues, 1-13, serve as a signal peptide directing secretion; sequence MLALLLTTTIVSG. Residues Asn-249 and Asn-510 are each glycosylated (N-linked (GlcNAc...) asparagine). Basic and acidic residues-rich tracts occupy residues 552 to 563 and 579 to 592; these read RIQEPKKGDKEQ and GEHD…RSEL. The tract at residues 552–592 is disordered; the sequence is RIQEPKKGDKEQLPNAPALLSESGIGQGEHDLETKNRRSEL. Residues 589 to 592 carry the Prevents secretion from ER motif; the sequence is RSEL.

This sequence belongs to the glycosyltransferase 25 family.

The protein localises to the endoplasmic reticulum lumen. The polypeptide is Glycosyltransferase 25 family member (Anopheles gambiae (African malaria mosquito)).